Reading from the N-terminus, the 235-residue chain is MENKNQKHNNEFHEKNQQSQKDNNNVKKENLHEDQSDLNDANFDDGGKKNKLKNDIKKLNHLVDSLKNENNNKQAKIESLERQINLLNENFKSEVIKKASEAQTKLDEKIKEFQAKYETELKHAKKYALKSSAIELIDIVSNFELAVNSKVTNPEIANYLKGFQMFANMFKNYFQQNGITEIPVNLNDDFNAEVMQAFETQKAPNTQPNKVIKIIKKGYKLHDIVLVPATVIVSE.

Composition is skewed to basic and acidic residues over residues 1–16 (MENKNQKHNNEFHEKN) and 24–35 (NNVKKENLHEDQ). The disordered stretch occupies residues 1–51 (MENKNQKHNNEFHEKNQQSQKDNNNVKKENLHEDQSDLNDANFDDGGKKNK).

Belongs to the GrpE family. As to quaternary structure, homodimer.

The protein resides in the cytoplasm. Its function is as follows. Participates actively in the response to hyperosmotic and heat shock by preventing the aggregation of stress-denatured proteins, in association with DnaK and GrpE. It is the nucleotide exchange factor for DnaK and may function as a thermosensor. Unfolded proteins bind initially to DnaJ; upon interaction with the DnaJ-bound protein, DnaK hydrolyzes its bound ATP, resulting in the formation of a stable complex. GrpE releases ADP from DnaK; ATP binding to DnaK triggers the release of the substrate protein, thus completing the reaction cycle. Several rounds of ATP-dependent interactions between DnaJ, DnaK and GrpE are required for fully efficient folding. The protein is Protein GrpE of Malacoplasma penetrans (strain HF-2) (Mycoplasma penetrans).